The sequence spans 438 residues: Adenosylhomocysteinase (438 aa).

Residues T61, D137, and E162 each contribute to the substrate site. 163 to 165 lines the NAD(+) pocket; the sequence is TTT. Positions 192 and 196 each coordinate substrate. Residues N197, 226–231, E249, N284, 305–307, and N352 contribute to the NAD(+) site; these read GYGDVG and IGH.

This sequence belongs to the adenosylhomocysteinase family. Requires NAD(+) as cofactor.

It is found in the cytoplasm. It catalyses the reaction S-adenosyl-L-homocysteine + H2O = L-homocysteine + adenosine. The protein operates within amino-acid biosynthesis; L-homocysteine biosynthesis; L-homocysteine from S-adenosyl-L-homocysteine: step 1/1. May play a key role in the regulation of the intracellular concentration of adenosylhomocysteine. This Flavobacterium johnsoniae (strain ATCC 17061 / DSM 2064 / JCM 8514 / BCRC 14874 / CCUG 350202 / NBRC 14942 / NCIMB 11054 / UW101) (Cytophaga johnsonae) protein is Adenosylhomocysteinase.